Here is a 148-residue protein sequence, read N- to C-terminus: Receptor activity-modifying protein 1 (148 aa).

Residues 1-26 (MVRVLRGLPWRGLWLLLAHQLFLVTA) form the signal peptide. Disulfide bonds link cysteine 27–cysteine 82, cysteine 40–cysteine 72, and cysteine 57–cysteine 104. Over 27–118 (CQDAHYGTLM…RALGDPPSTI (92 aa)) the chain is Extracellular. Residues 119–140 (LCPFVVLPITVTLLVTALVVWR) form a helical membrane-spanning segment. Topologically, residues 141-148 (SKRAESIV) are cytoplasmic.

Belongs to the RAMP family. In terms of assembly, heterodimer of CALCRL and RAMP1; the interaction induces allosteric modulation of CALCRL function and CGRP1/CALCA and CGRP2/CALCB ligand specificity. Heterodimer of CALCR and RAMP1; interaction forms the AMYR1 receptor complex for amylin/IAPP and CGRP1/CALCA ligands.

It localises to the cell membrane. Accessory protein that interacts with and modulates the function of G-protein coupled receptors including calcitonin gene-related peptide type 1 receptor (CALCRL) and calcitonin receptor (CALCR). Required for the transport of CALCRL to the plasma membrane. Together with CALCRL, form the receptor complex for the calcitonin gene-related peptides CGRP1/CALCA and CGRP2/CALCB. Together with CALCR, form the AMYR1 receptor complex for amylin/IAPP and CGRP1/CALCA. The protein is Receptor activity-modifying protein 1 (RAMP1) of Cavia porcellus (Guinea pig).